The chain runs to 128 residues: Large ribosomal subunit protein bL12 (128 aa).

This sequence belongs to the bacterial ribosomal protein bL12 family. Homodimer. Part of the ribosomal stalk of the 50S ribosomal subunit. Forms a multimeric L10(L12)X complex, where L10 forms an elongated spine to which 2 to 4 L12 dimers bind in a sequential fashion. Binds GTP-bound translation factors.

Forms part of the ribosomal stalk which helps the ribosome interact with GTP-bound translation factors. Is thus essential for accurate translation. This chain is Large ribosomal subunit protein bL12, found in Thermotoga petrophila (strain ATCC BAA-488 / DSM 13995 / JCM 10881 / RKU-1).